A 204-amino-acid polypeptide reads, in one-letter code: Somatotropin (204 aa).

Residues Met1–Ser17 form the signal peptide. Position 18 is a pyrrolidone carboxylic acid (Gln18). His36 is a Zn(2+) binding site. Cysteines 69 and 177 form a disulfide. Glu186 is a Zn(2+) binding site. An intrachain disulfide couples Cys194 to Cys202.

The protein belongs to the somatotropin/prolactin family.

The protein resides in the secreted. Its function is as follows. Growth hormone plays an important role in growth control and involved in the regulation of several anabolic processes. This chain is Somatotropin (gh), found in Perca flavescens (American yellow perch).